Reading from the N-terminus, the 576-residue chain is Proline--tRNA ligase (576 aa).

This sequence belongs to the class-II aminoacyl-tRNA synthetase family. ProS type 1 subfamily. In terms of assembly, homodimer.

It localises to the cytoplasm. It carries out the reaction tRNA(Pro) + L-proline + ATP = L-prolyl-tRNA(Pro) + AMP + diphosphate. Its function is as follows. Catalyzes the attachment of proline to tRNA(Pro) in a two-step reaction: proline is first activated by ATP to form Pro-AMP and then transferred to the acceptor end of tRNA(Pro). As ProRS can inadvertently accommodate and process non-cognate amino acids such as alanine and cysteine, to avoid such errors it has two additional distinct editing activities against alanine. One activity is designated as 'pretransfer' editing and involves the tRNA(Pro)-independent hydrolysis of activated Ala-AMP. The other activity is designated 'posttransfer' editing and involves deacylation of mischarged Ala-tRNA(Pro). The misacylated Cys-tRNA(Pro) is not edited by ProRS. The polypeptide is Proline--tRNA ligase (Leptospira borgpetersenii serovar Hardjo-bovis (strain L550)).